Reading from the N-terminus, the 799-residue chain is Protein translocase subunit SecA (799 aa).

ATP is bound by residues glutamine 85, 103 to 107, and aspartate 504; that span reads GEGKT.

Belongs to the SecA family. In terms of assembly, monomer and homodimer. Part of the essential Sec protein translocation apparatus which comprises SecA, SecYEG and auxiliary proteins SecDF. Other proteins may also be involved.

It localises to the cell membrane. It is found in the cytoplasm. It catalyses the reaction ATP + H2O + cellular proteinSide 1 = ADP + phosphate + cellular proteinSide 2.. Functionally, part of the Sec protein translocase complex. Interacts with the SecYEG preprotein conducting channel. Has a central role in coupling the hydrolysis of ATP to the transfer of proteins into and across the cell membrane, serving as an ATP-driven molecular motor driving the stepwise translocation of polypeptide chains across the membrane. This is Protein translocase subunit SecA from Lactobacillus gasseri (strain ATCC 33323 / DSM 20243 / BCRC 14619 / CIP 102991 / JCM 1131 / KCTC 3163 / NCIMB 11718 / NCTC 13722 / AM63).